The primary structure comprises 395 residues: Glyceraldehyde-3-phosphate dehydrogenase, testis-specific (395 aa).

The testis-specific N-terminal extension stretch occupies residues 1-60 (MSKRDIVLTNVTVVQLLRQPCPEPRVEAEPEPPAQPQPQPEPIKEEVPPPPPPPPAPKKV). The interval 19 to 59 (QPCPEPRVEAEPEPPAQPQPQPEPIKEEVPPPPPPPPAPKK) is disordered. 2 stretches are compositionally biased toward pro residues: residues 31-41 (EPPAQPQPQPE) and 48-57 (PPPPPPPPAP). NAD(+) is bound by residues 72-73 (RI), Asp-93, and Lys-138. Residues 210–212 (SCT), Thr-241, 270–271 (TG), and Arg-293 contribute to the D-glyceraldehyde 3-phosphate site. Cys-211 acts as the Nucleophile in catalysis. NAD(+) is bound at residue Asn-375.

The protein belongs to the glyceraldehyde-3-phosphate dehydrogenase family. Homotetramer.

The protein resides in the cytoplasm. The catalysed reaction is D-glyceraldehyde 3-phosphate + phosphate + NAD(+) = (2R)-3-phospho-glyceroyl phosphate + NADH + H(+). It functions in the pathway carbohydrate degradation; glycolysis; pyruvate from D-glyceraldehyde 3-phosphate: step 1/5. Functionally, may play an important role in regulating the switch between different pathways for energy production during spermiogenesis and in the spermatozoon. Required for sperm motility and male fertility. In Bos taurus (Bovine), this protein is Glyceraldehyde-3-phosphate dehydrogenase, testis-specific (GAPDHS).